The primary structure comprises 209 residues: MHLKRALITLSLITLPIIPFSSYAVESINNTGSMESPASVAADSTSNKQDESWWQRSKHNLSATWNTSQSHDIYIPAITWHNRWTYDKEKTDKYNERPWGAGYGVSRLDQDGDWHGLYIMAFKDSFNKWEPIGGYGYEKRWRPTHDQDFQLGLGFTAGFTMRDNWNYIPIPVLLPLASISYSKLSFQATYIPGTYNNGNVFFAWFRWQI.

The N-terminal stretch at 1–24 (MHLKRALITLSLITLPIIPFSSYA) is a signal peptide. Residues His81, Asp124, and Ser125 contribute to the active site.

This sequence belongs to the lipid A palmitoyltransferase family. In terms of assembly, homodimer.

The protein resides in the cell outer membrane. The enzyme catalyses a lipid A + a 1,2-diacyl-sn-glycero-3-phosphocholine = a hepta-acyl lipid A + a 2-acyl-sn-glycero-3-phosphocholine. The catalysed reaction is a lipid IVA + a 1,2-diacyl-sn-glycero-3-phosphocholine = a lipid IVB + a 2-acyl-sn-glycero-3-phosphocholine. It carries out the reaction a lipid IIA + a 1,2-diacyl-sn-glycero-3-phosphocholine = a lipid IIB + a 2-acyl-sn-glycero-3-phosphocholine. Functionally, transfers a fatty acid residue from the sn-1 position of a phospholipid to the N-linked hydroxyfatty acid chain on the proximal unit of lipid A or its precursors. This Pectobacterium parmentieri (strain WPP163) (Pectobacterium wasabiae (strain WPP163)) protein is Lipid A acyltransferase PagP.